The following is a 297-amino-acid chain: Haloalkane dehalogenase (297 aa).

The AB hydrolase-1 domain occupies 47–148 (PPIVLLHGEP…AIARLVVANG (102 aa)). The active-site Nucleophile is D123. Catalysis depends on D250, which acts as the Proton donor. H279 (proton acceptor) is an active-site residue.

It belongs to the haloalkane dehalogenase family. Type 1 subfamily. As to quaternary structure, monomer.

The enzyme catalyses 1-haloalkane + H2O = a halide anion + a primary alcohol + H(+). In terms of biological role, catalyzes hydrolytic cleavage of carbon-halogen bonds in halogenated aliphatic compounds, leading to the formation of the corresponding primary alcohols, halide ions and protons. The sequence is that of Haloalkane dehalogenase from Mycobacterium marinum (strain ATCC BAA-535 / M).